A 469-amino-acid polypeptide reads, in one-letter code: Pancreatic lipase-related protein 2 (469 aa).

An N-terminal signal peptide occupies residues 1-17 (MLPPWTLGLLLLATVRG). Cysteines 21 and 27 form a disulfide. Residues 93-105 (IHGFLDKAEDSWP) form a required for galactolipase activity region. Cysteine 109 and cysteine 120 are oxidised to a cystine. The active-site Nucleophile is serine 171. The Charge relay system role is filled by aspartate 195. Glutamate 206, arginine 209, aspartate 211, and aspartate 214 together coordinate Ca(2+). Cysteine 256 and cysteine 280 form a disulfide bridge. The tract at residues 257–279 (KKNVLSTITDIDGIWEGIGGFVS) is required for galactolipase activity. Histidine 282 (charge relay system) is an active-site residue. 2 disulfide bridges follow: cysteine 304–cysteine 315 and cysteine 318–cysteine 323. Asparagine 353 and asparagine 428 each carry an N-linked (GlcNAc...) asparagine glycan. Positions 357–469 (WRYKISVTLS…ENVLQSLYPC (113 aa)) constitute a PLAT domain. Cysteine 453 and cysteine 469 are oxidised to a cystine.

This sequence belongs to the AB hydrolase superfamily. Lipase family. Pancreas.

The protein localises to the secreted. It localises to the zymogen granule membrane. The protein resides in the cell projection. It is found in the neuron projection. The enzyme catalyses a triacylglycerol + H2O = a diacylglycerol + a fatty acid + H(+). It carries out the reaction a 1,2-diacyl-3-O-(beta-D-galactosyl)-sn-glycerol + 2 H2O = 3-beta-D-galactosyl-sn-glycerol + 2 a fatty acid + 2 H(+). It catalyses the reaction 1,2,3-tri-(9Z-octadecenoyl)-glycerol + H2O = di-(9Z)-octadecenoylglycerol + (9Z)-octadecenoate + H(+). The catalysed reaction is di-(9Z)-octadecenoylglycerol + H2O = (9Z-octadecenoyl)-glycerol + (9Z)-octadecenoate + H(+). The enzyme catalyses (9Z-octadecenoyl)-glycerol + H2O = glycerol + (9Z)-octadecenoate + H(+). It carries out the reaction 1-(9Z-octadecenoyl)-glycerol + H2O = glycerol + (9Z)-octadecenoate + H(+). It catalyses the reaction 1,2,3-tripropanoylglycerol + H2O = dipropanoylglycerol + propanoate + H(+). The catalysed reaction is 1,2,3-tributanoylglycerol + H2O = dibutanoylglycerol + butanoate + H(+). The enzyme catalyses 1,2,3-trioctanoylglycerol + H2O = dioctanoylglycerol + octanoate + H(+). It carries out the reaction 1,2-didecanoylglycerol + H2O = decanoylglycerol + decanoate + H(+). It catalyses the reaction long chain 1,2-diacyl-3-O-beta-D-galactosyl-sn-glycerol + H2O = long chain acyl-3-O-beta-D-galactosyl-sn-glycerol + a fatty acid + H(+). The catalysed reaction is 1,2-dioctanoyl-3-O-beta-D-galactosyl-sn-glycerol + H2O = octanoyl-3-(beta-D-galactosyl)-sn-glycerol + octanoate + H(+). The enzyme catalyses 1,2-didodecanoyl-3-beta-D-galactosyl-sn-glycerol + H2O = dodecanoyl-3-beta-D-galactosyl-sn-glycerol + dodecanoate + H(+). It carries out the reaction 1-beta-D-galactosyl-2,3-didodecanoyl-sn-glycerol + H2O = 1-beta-D-galactosyl-dodecanoyl-sn-glycerol + dodecanoate + H(+). It catalyses the reaction a 1,2-diacyl-3-O-[alpha-D-galactosyl-(1-&gt;6)-beta-D-galactosyl]-sn-glycerol + H2O = acyl-3-O-[alpha-D-galactosyl-(1-&gt;6)-beta-D-galactosyl]-sn-glycerol + a fatty acid + H(+). The catalysed reaction is long chain 1,2-diacyl-3-O-[alpha-D-galactosyl-(1-&gt;6)-beta-D-galactosyl]-sn-glycerol + H2O = long chain acyl-3-O-[alpha-D-galactosyl-(1-&gt;6)-beta-D-galactosyl]-sn-glycerol + a fatty acid + H(+). The enzyme catalyses 1,2-dioctanoyl-3-O-[alpha-D-galactosyl-(1-&gt;6)-beta-D-galactosyl]-sn-glycerol + H2O = octanoyl-3-O-[alpha-D-galactosyl-(1-&gt;6)-beta-D-galactosyl]-sn-glycerol + octanoate + H(+). It carries out the reaction 1,2-didodecanoyl-3-O-[alpha-D-galactosyl-(1-&gt;6)-beta-D-galactosyl]-sn-glycerol + H2O = dodecanoyl-3-O-[alpha-D-galactosyl-(1-&gt;6)-beta-D-galactosyl]-sn-glycerol + dodecanoate + H(+). It catalyses the reaction a 1,2-diacyl-sn-glycero-3-phosphocholine + H2O = a monoacyl-sn-glycero-3-phosphocholine + a fatty acid + H(+). The protein operates within glycerolipid metabolism; triacylglycerol degradation. It participates in glycolipid metabolism. With respect to regulation, regulated by CLPS and bile salts levels ranging 1-5 mM in neonates and 2-30 mM in healthy adults. CLPS stimulates milk fat digestion in the presence of 4 mM bile salts. Triacylglycerol lipase activity toward short- and medium-chain triglycerides is inhibited by increasing concentrations of bile salts and weakly reactivated by CLPS. Optimal triacylglycerol lipase activity is reached at bile salts concentrations ranging from 0.1 to 0.5 mM and then decreases at concentrations higher than 1 mM. Lipase activity toward long-chain glycerolipids is stimulated by CLPS in the presence of 4 mM bile salts. Galactolipase activity is inhibited at high concentrations of bile salts. Triacylglycerol lipase activity is inhibited by anti-obesity drug tetrahydrolipstatin. Its function is as follows. Lipase that primarily hydrolyzes triglycerides and galactosylglycerides. In neonates, may play a major role in pancreatic digestion of dietary fats such as milk fat globules enriched in long-chain triglycerides. Hydrolyzes short-, medium- and long-chain fatty acyls in triglycerides without apparent positional specificity. Can completely deacylate triacylglycerols. When the liver matures and bile salt synthesis increases, likely functions mainly as a galactolipase and monoacylglycerol lipase. Hydrolyzes monogalactosyldiglycerols (MGDG) and digalactosyldiacylglycerols (DGDG) present in a plant-based diet, releasing long-chain polyunsaturated fatty acids. Hydrolyzes medium- and long-chain fatty acyls in galactolipids. May act together with LIPF to hydrolyze partially digested triglycerides. Hydrolyzes long-chain monoglycerides with high efficiency. In cytotoxic T cells, contributes to perforin-dependent cell lysis, but is unlikely to mediate direct cytotoxicity. Also has low phospholipase activity. In neurons, required for the localization of the phospholipid 1-oleoyl-2-palmitoyl-PC (OPPC) to neurite tips through acyl chain remodeling of membrane phospholipids. The resulting OPPC-rich lipid membrane domain recruits the t-SNARE protein STX4 by selectively interacting with the STX4 transmembrane domain and this promotes surface expression of the dopamine transporter SLC6A3/DAT at neurite tips by facilitating fusion of SLC6A3-containing transport vesicles with the plasma membrane. The polypeptide is Pancreatic lipase-related protein 2 (Homo sapiens (Human)).